The chain runs to 557 residues: Tektin-5 (557 aa).

Positions 302-386 (DNIRHAQNMR…LLERAIVAKE (85 aa)) form a coiled coil. 6 tandem repeats follow at residues 507–512 (CSGSAL), 513–518 (CKGPAS), 519–524 (CGGGAS), 525–530 (CGGGAS), 531–536 (CGGHAP), and 537–541 (CGSAL). Positions 507 to 541 (CSGSALCKGPASCGGGASCGGGASCGGHAPCGSAL) are 6 X 6 AA approximate tandem repeats of C-[GSK]-G-[GSPH]-A-[SLP].

It belongs to the tektin family. Microtubule inner protein component of sperm flagellar doublet microtubules. Interacts with TEKT3. Post-translationally, ubiquitinated, leading to its degradation. Deubiquitinated by USP16, promoting its stability. Strongly expressed in germ cells of the testis (at protein level). Expressed in spermatozoa. Also detected in brain.

The protein localises to the cytoplasm. It localises to the cytoskeleton. It is found in the flagellum axoneme. Functionally, sperm-specific microtubule inner protein (MIP) part of the dynein-decorated doublet microtubules (DMTs) in flagellar axoneme. Forms an extensive interaction network in different conformations that reinforces the helix bundle composed by other tektin proteins (TEKT1 to TEKT4) and MIPs to anchor the tektin bundle onto the tubulin wall of A-tubule of the sperm flagellum. This is Tektin-5 from Mus musculus (Mouse).